Reading from the N-terminus, the 728-residue chain is Meiotic sister-chromatid recombination protein 3 (728 aa).

Disordered stretches follow at residues 33–171, 236–261, 300–335, 363–403, 422–454, 495–514, and 561–728; these read QLSA…GRTQ, NETDNEKPYSPVSESHLQDDSELNVE, PTHQTSSKYIHNKRKQASTTRRKKRPPAVKNAEAEA, SDNA…VKSN, SAPHEVHNHSVSTHFKSNKAVDPVPEPKSANTG, VGVSHLGSTGSIPPNEQHYL, and YGYQ…KSSR. Over residues 35–46 the composition is skewed to low complexity; it reads SAAAASAASAAS. The segment covering 48–58 has biased composition (polar residues); sequence DRTNYSRSHSL. Residues S57 and S64 each carry the phosphoserine modification. Positions 80–93 are enriched in low complexity; that stretch reads STSSAAPPTSRAAA. Polar residues-rich tracts occupy residues 95–106, 118–132, and 140–171; these read QYSQKTYSLRSQ, YTTNGSRMNSMTSGA, and KNKSTAGNNNDSRANSITVKTTQVTDPSGRTQ. S127, S151, and S155 each carry phosphoserine. Over residues 251-261 the composition is skewed to basic and acidic residues; the sequence is HLQDDSELNVE. Residues 309 to 326 are compositionally biased toward basic residues; it reads IHNKRKQASTTRRKKRPP. Phosphoserine is present on S363. Polar residues-rich tracts occupy residues 363 to 373 and 385 to 403; these read SDNASAPLGSN and TLRSSSDSPTATANLVKSN. A compositionally biased stretch (polar residues) spans 590–634; the sequence is EGVTTAKPSSNEGVMTNPVVTDSPSPLQQQIDSTTASSNGQSQGN. Residues 635–646 are compositionally biased toward low complexity; it reads VPTSAVASTTRT. T646 carries the phosphothreonine modification. Composition is skewed to polar residues over residues 654–668, 675–684, and 691–708; these read NLKSSSSLLQDQTPQ, DPTTSSTNEL, and MVTSTHATKTIQAQTQDP. The residue at position 660 (S660) is a Phosphoserine. Residues 711-728 show a composition bias toward basic residues; the sequence is KHKKSSFFTKLFKKKSSR.

Its subcellular location is the cell membrane. May be involved in the control of meiotic sister-chromatid recombination. In Saccharomyces cerevisiae (strain ATCC 204508 / S288c) (Baker's yeast), this protein is Meiotic sister-chromatid recombination protein 3 (MSC3).